The chain runs to 368 residues: Glutamate 5-kinase (368 aa).

Position 12 (K12) interacts with ATP. Substrate-binding residues include S52, D139, and N151. Residues 171–172 (SD) and 213–219 (TGGMKTK) each bind ATP. Positions 277–354 (KGALIIDDGA…KEIEKLLGYI (78 aa)) constitute a PUA domain.

This sequence belongs to the glutamate 5-kinase family.

The protein localises to the cytoplasm. The catalysed reaction is L-glutamate + ATP = L-glutamyl 5-phosphate + ADP. The protein operates within amino-acid biosynthesis; L-proline biosynthesis; L-glutamate 5-semialdehyde from L-glutamate: step 1/2. Catalyzes the transfer of a phosphate group to glutamate to form L-glutamate 5-phosphate. In Pelagibacter ubique (strain HTCC1062), this protein is Glutamate 5-kinase.